The chain runs to 292 residues: 2-methylisocitrate lyase (292 aa).

A substrate-binding site is contributed by 44–46; sequence SGA. 2 residues coordinate Mg(2+): Asp84 and Asp86. Substrate is bound by residues 121–122, Arg156, Glu186, 208–210, Arg239, and Arg268; these read CG and NMT.

It belongs to the isocitrate lyase/PEP mutase superfamily. Methylisocitrate lyase family. In terms of assembly, homotetramer; dimer of dimers. Requires Mg(2+) as cofactor.

It catalyses the reaction (2S,3R)-3-hydroxybutane-1,2,3-tricarboxylate = pyruvate + succinate. It participates in organic acid metabolism; propanoate degradation. In terms of biological role, involved in the catabolism of short chain fatty acids (SCFA) via the 2-methylcitrate cycle I (propionate degradation route). Catalyzes the thermodynamically favored C-C bond cleavage of (2R,3S)-2-methylisocitrate to yield pyruvate and succinate via an alpha-carboxy-carbanion intermediate. This Shewanella oneidensis (strain ATCC 700550 / JCM 31522 / CIP 106686 / LMG 19005 / NCIMB 14063 / MR-1) protein is 2-methylisocitrate lyase.